A 118-amino-acid polypeptide reads, in one-letter code: MNTIDMLELEQMKKNIPPFKPGDTVKVHVKIVEGDKSRIQAFQGVVIARQNGGIRESFTVRKISNGIGVERVFPLHSPSLDAIEVITRGHVRRAKLYYLRKLRGKAARIREKKYVAAH.

Belongs to the bacterial ribosomal protein bL19 family.

In terms of biological role, this protein is located at the 30S-50S ribosomal subunit interface and may play a role in the structure and function of the aminoacyl-tRNA binding site. This is Large ribosomal subunit protein bL19 from Geobacter metallireducens (strain ATCC 53774 / DSM 7210 / GS-15).